We begin with the raw amino-acid sequence, 140 residues long: MDQELMRIGVSLPDNLLDRFDNIIEKRGYSSRSEGIRDAIRNYIMHYEWMNEVEGERIGVITLIYDHDQRGLVNNLTDIQHEYMGMIKSSVHVHLDHDNCLELIMLQGEGKQVKEVAEKMMALKGVKHVKLTTVSPNTEL.

Ni(2+) is bound by residues H81, H92, H94, and C100.

It belongs to the transcriptional regulatory CopG/NikR family. It depends on Ni(2+) as a cofactor.

Transcriptional regulator. The chain is Putative nickel-responsive regulator from Methanocella arvoryzae (strain DSM 22066 / NBRC 105507 / MRE50).